Consider the following 276-residue polypeptide: ATP synthase subunit a (276 aa).

6 helical membrane passes run 47–67 (WHID…WLFY), 107–127 (IAPL…MDLI), 152–172 (DLNV…FYSI), 188–208 (PFNH…TLVA), 226–246 (LIFI…SVPW), and 247–267 (AIFH…LTIV).

It belongs to the ATPase A chain family. As to quaternary structure, F-type ATPases have 2 components, CF(1) - the catalytic core - and CF(0) - the membrane proton channel. CF(1) has five subunits: alpha(3), beta(3), gamma(1), delta(1), epsilon(1). CF(0) has three main subunits: a(1), b(2) and c(9-12). The alpha and beta chains form an alternating ring which encloses part of the gamma chain. CF(1) is attached to CF(0) by a central stalk formed by the gamma and epsilon chains, while a peripheral stalk is formed by the delta and b chains.

It is found in the cell inner membrane. Key component of the proton channel; it plays a direct role in the translocation of protons across the membrane. The sequence is that of ATP synthase subunit a from Shewanella pealeana (strain ATCC 700345 / ANG-SQ1).